The sequence spans 317 residues: MAFRWAIQMALRRGGGGGQRLLLTQHQHQNYQFFKTSSSTQFSTRNSQILDLDTPQKSPNFSENSKNKKSKKIEWSTGSILMLGLPAFAFSLGVWQIYRLIWKLELIEHLKSRLSQEAIELPDDLSSSSLEPLEYCRVRVTGEFLHQKEFVISPRGRFDPAKKTSASVGSMLSENEMSSHGGHLITPFRLKNTGKVILINRGWLPTFYFDPESHAKTNPQGTVILEAIVRKTEQRPQFVGQNVPEQGVWYYRDLEQMAKWHGTEPVWLDAAYETTVPGGPIGGQTNINVRNEHMNYLTTWFTLTLVTMLMWIHKFRK.

2 helical membrane passes run 78–98 and 293–313; these read GSILMLGLPAFAFSLGVWQIY and HMNYLTTWFTLTLVTMLMWIH.

It belongs to the SURF1 family.

It is found in the mitochondrion inner membrane. In terms of biological role, probably involved in the biogenesis of the COX complex. This is SURF1-like protein (sft-1) from Caenorhabditis briggsae.